The chain runs to 192 residues: Sarcoplasmic calcium-binding protein 1 (192 aa).

N-acetylalanine is present on Ala1. EF-hand domains follow at residues 4–39, 56–91, 100–135, and 136–171; these read WDNR…NTLI, IMSN…VCVG, AFKV…RSAF, and ANIK…YAQF. Ca(2+) contacts are provided by Asp17, Asp19, Asn21, Asp28, Asp69, Asn71, Asp73, Glu75, Glu80, Asp113, Asn115, Asp117, and Glu124.

SCPs from crayfish, lobster, and shrimp are polymorphic dimers.

Like parvalbumins, SCPs seem to be more abundant in fast contracting muscles, but no functional relationship can be established from this distribution. This Astacus leptodactylus (Turkish narrow-clawed crayfish) protein is Sarcoplasmic calcium-binding protein 1.